Reading from the N-terminus, the 313-residue chain is Holliday junction branch migration complex subunit RuvB (313 aa).

Positions 1–157 (MNEYIGQGNI…FGLIMELDFY (157 aa)) are large ATPase domain (RuvB-L). ATP is bound by residues G38, K41, T42, T43, 104 to 106 (EDF), R147, Y157, and R194. Position 42 (T42) interacts with Mg(2+). A small ATPAse domain (RuvB-S) region spans residues 158–228 (SIDELSKIIE…MVEEIMFLLG (71 aa)). The head domain (RuvB-H) stretch occupies residues 231–313 (KEGLDELDRK…KVQRGLFDEE (83 aa)). DNA is bound by residues R286 and R291.

The protein belongs to the RuvB family. In terms of assembly, homohexamer. Forms an RuvA(8)-RuvB(12)-Holliday junction (HJ) complex. HJ DNA is sandwiched between 2 RuvA tetramers; dsDNA enters through RuvA and exits via RuvB. An RuvB hexamer assembles on each DNA strand where it exits the tetramer. Each RuvB hexamer is contacted by two RuvA subunits (via domain III) on 2 adjacent RuvB subunits; this complex drives branch migration. In the full resolvosome a probable DNA-RuvA(4)-RuvB(12)-RuvC(2) complex forms which resolves the HJ.

It localises to the cytoplasm. The catalysed reaction is ATP + H2O = ADP + phosphate + H(+). In terms of biological role, the RuvA-RuvB-RuvC complex processes Holliday junction (HJ) DNA during genetic recombination and DNA repair, while the RuvA-RuvB complex plays an important role in the rescue of blocked DNA replication forks via replication fork reversal (RFR). RuvA specifically binds to HJ cruciform DNA, conferring on it an open structure. The RuvB hexamer acts as an ATP-dependent pump, pulling dsDNA into and through the RuvAB complex. RuvB forms 2 homohexamers on either side of HJ DNA bound by 1 or 2 RuvA tetramers; 4 subunits per hexamer contact DNA at a time. Coordinated motions by a converter formed by DNA-disengaged RuvB subunits stimulates ATP hydrolysis and nucleotide exchange. Immobilization of the converter enables RuvB to convert the ATP-contained energy into a lever motion, pulling 2 nucleotides of DNA out of the RuvA tetramer per ATP hydrolyzed, thus driving DNA branch migration. The RuvB motors rotate together with the DNA substrate, which together with the progressing nucleotide cycle form the mechanistic basis for DNA recombination by continuous HJ branch migration. Branch migration allows RuvC to scan DNA until it finds its consensus sequence, where it cleaves and resolves cruciform DNA. This is Holliday junction branch migration complex subunit RuvB from Thermosipho melanesiensis (strain DSM 12029 / CIP 104789 / BI429).